The chain runs to 857 residues: MAFPAPAFSLANLLNGSYGVDTPEDVERLRSEQREEAAAACRNYRPLPAVDVSESVTEDAHSLRTPDGAPAEAVSDEFVTYGAEDYLEKSDDELLVAFETMVKPMRIGQLWCPAFNKCSFISSIAMARALLLAPRTSHRTMKCFEDLVAAIYTKSDFYYSEECEADDAQIDISSRDVPGYSFEPWSRTSGFEPPPICEACDMIMYQCPCFDFNALKKSCAERTFADDYVIEGLDGVVDNATLLSNLGPFLVPVKCQYEKCPTPTIAIPPDLNRATDRVDINLVQSICDSTLPTHSNYDDSFHQVFVESADYSIDLDHVRLRQSDLIAKIPDSGHMIPVLNTGSGHKRVGTTKEVLTAIKKRNADVPELGDSVNLSRLSKAVAERFFISYINGNSLASSNFVNVVSNFHDYMEKWKSSGLSYDDLPDLHAENLQFYDHMIKSDVKPVVSDTLNIDRPVPATITYHKKSITSQFSPLFTALFERFQRCLRERIILPVGKISSLEMAGFDVKNKHCLEIDLSKFDKSQGEFHLLIQEHILNGLGCPAPITKWWCDFHRFSYIRDRRAGVGMPISFQRRTGDAFTYFGNTIVTMAEFAWCYDTDQFEKLLFSGDDSLGFSLLPPVGDPSKFTTLFNMEAKVMEPAVPYICSKFLLSDEFGNTFSVPDPLREVQRLGTKKIPYSDNDEFLFAHFMSFVDRLKFLDRMSQSCIDQLSIFFELKYKKSGEEAALMLGAFKKYTANFQSYKELYYSDRRQCELINSFCSTEFRVERVNSNKQRKKYGIERRCNDKRRTPTGSYGGGEEAETKVSQTESTGTRSQKSQRESAFKSQTVPLPTVLSSRWFGTDRVMPPCERGGVTRA.

Residues 511 to 624 (KHCLEIDLSK…FSLLPPVGDP (114 aa)) form the RdRp catalytic domain. Residues 780-789 (IERRCNDKRR) are compositionally biased toward basic and acidic residues. The tract at residues 780 to 829 (IERRCNDKRRTPTGSYGGGEEAETKVSQTESTGTRSQKSQRESAFKSQTV) is disordered. Over residues 804–816 (KVSQTESTGTRSQ) the composition is skewed to polar residues.

It belongs to the ssRNA positive-strand viruses RNA-directed RNA polymerase family. In terms of assembly, interacts with replication protein 1a.

It catalyses the reaction RNA(n) + a ribonucleoside 5'-triphosphate = RNA(n+1) + diphosphate. RNA-dependent RNA polymerase which replicates the viral genome composed of 3 RNA segments, RNA1, RNA2 and RNA3. This chain is RNA-directed RNA polymerase 2a, found in Cucumis sativus (Cucumber).